The primary structure comprises 438 residues: Envelope glycoprotein M (438 aa).

The Intravirion portion of the chain corresponds to 1 to 13 (MAGSAQPAAVHWR). The helical transmembrane segment at 14–34 (LWLAQVGVFAGLALLLLITLI) threads the bilayer. The Virion surface segment spans residues 35 to 88 (GAASPGAGLPCFYAAIVNYNARNLSADGGAWAQRELGARHPALFLETPTTAAFS). Residues 89-109 (AYTAVVLLAVAAFDVAAAIII) form a helical membrane-spanning segment. The Intravirion segment spans residues 110–132 (RRENSGGFAAAYHMNALATLATP). The chain crosses the membrane as a helical span at residues 133–153 (PGALLLGALAAWTLQAAVLLL). Residues 154–158 (SHKIM) are Virion surface-facing. A helical membrane pass occupies residues 159-179 (VLAAATYLAHLAPPAAFVGLF). The Intravirion portion of the chain corresponds to 180 to 212 (CTAGLPGAEYAQAVHALRERSPRAHRLLGPGRA). A helical membrane pass occupies residues 213-233 (VMINLAGGLLALIIGTAPLML). Residues 234 to 248 (GQLLGAGLGLSLAQT) are Virion surface-facing. A helical transmembrane segment spans residues 249 to 269 (VVAGVTVFCLAAVLFLVLTEL). Residues 270–276 (VLSRYTQ) lie on the Intravirion side of the membrane. A helical membrane pass occupies residues 277 to 297 (VLPGPAFGTLVAASCIAVASH). The Virion surface portion of the chain corresponds to 298–317 (DYFHQLRGVVRTQAPRAAAR). The helical transmembrane segment at 318–338 (VKLALAGVALLAVAMLVLRLV) threads the bilayer. The Intravirion segment spans residues 339–438 (RACLHHRRKG…PRSPPPAHVK (100 aa)). Residues 395 to 438 (EEAVYEAHAPPRPPTIPLRRPEVPHSRASHPRPPPRSPPPAHVK) are disordered. A compositionally biased stretch (pro residues) spans 425 to 438 (PRPPPRSPPPAHVK).

It belongs to the herpesviridae glycoprotein M family. Interacts (via N-terminus) with gN (via N-terminus). The gM-gN heterodimer forms the gCII complex. Post-translationally, N-glycosylated. It is not O-glycosylated.

It localises to the virion membrane. Its subcellular location is the host Golgi apparatus. It is found in the host trans-Golgi network. The protein localises to the host endosome membrane. The protein resides in the host nucleus inner membrane. Its function is as follows. Envelope glycoprotein important for virion assembly and egress. Plays a role in the correct incorporation of gH-gL into virion membrane. Directs the glycoprotein N (gN) to the host trans-Golgi network. The protein is Envelope glycoprotein M of Bovine herpesvirus 1.1 (strain Cooper) (BoHV-1).